A 207-amino-acid chain; its full sequence is Thymidylate kinase (207 aa).

An ATP-binding site is contributed by 10-17 (GIEGSGKS).

It belongs to the thymidylate kinase family.

It catalyses the reaction dTMP + ATP = dTDP + ADP. In terms of biological role, phosphorylation of dTMP to form dTDP in both de novo and salvage pathways of dTTP synthesis. This Halothermothrix orenii (strain H 168 / OCM 544 / DSM 9562) protein is Thymidylate kinase.